Reading from the N-terminus, the 531-residue chain is Cytochrome P450 monooxygenase peniB (531 aa).

Residues 30-48 (ILSIAAVVFLGYLLLRPLF) traverse the membrane as a helical segment. Cys-445 lines the heme pocket.

The protein belongs to the cytochrome P450 family. It depends on heme as a cofactor.

It localises to the membrane. It carries out the reaction silphinene-15-oate + 2 reduced [NADPH--hemoprotein reductase] + 2 O2 = gamma-lactone-2-keto[5.5.5.5]fenestrane + 2 oxidized [NADPH--hemoprotein reductase] + 3 H2O + H(+). It participates in secondary metabolite biosynthesis; terpenoid biosynthesis. Functionally, cytochrome P450 monooxygenase; part of the gene cluster that mediates the biosynthesis of penifulvin A, a potent insecticidal sesquiterpene that features a [5.5.5.6]dioxafenestrane ring. Within the pathway, peniB catalyzes the multi-step oxidation of silphinene to synthesize gamma-lactone-2-keto[5.5.5.5]fenestrane, including oxidation of the C15 methylgroup in silphinene to form silphinene-15-oic acid, activationof the C1-C2 double bond to form the gamma-lactone-2-hydroxy[5.5.5.5]fenestrane, and dehydrogenation of the hydroxy group at C2 of gamma-lactone-2-hydroxy[5.5.5.5]fenestrane to generate gamma-lactone-2-keto[5.5.5.5]fenestrane. The first step of the pathway is performed by the sesquiterpene cyclase peniA that generates the angular triquinane scaffold silphinene via cyclization of the linear farnesyl pyrophosphate (FPP). The cytochrome P450 monooxygenase peniB and the flavin-dependent monooxygenase peniC then catalyze a series of oxidation reactions to transform silphinene into penifulvin A. In Penicillium patulum (Penicillium griseofulvum), this protein is Cytochrome P450 monooxygenase peniB.